A 287-amino-acid polypeptide reads, in one-letter code: uncharacterized protein (287 aa).

The first 31 residues, 1 to 31 (MLGSMALKLRKWIWASIPSLALILSSCSALV), serve as a signal peptide directing secretion.

Belongs to the MG439/MG440 family.

This is an uncharacterized protein from Mycoplasma pneumoniae (strain ATCC 29342 / M129 / Subtype 1) (Mycoplasmoides pneumoniae).